The sequence spans 322 residues: GTP 3',8-cyclase (322 aa).

The 229-residue stretch at 5 to 233 (KYGRVVDYLR…NAPASIYRLD (229 aa)) folds into the Radical SAM core domain. Arg14 is a GTP binding site. [4Fe-4S] cluster contacts are provided by Cys21 and Cys25. An S-adenosyl-L-methionine-binding site is contributed by Tyr27. Residue Cys28 participates in [4Fe-4S] cluster binding. Arg64 contacts GTP. Gly68 contributes to the S-adenosyl-L-methionine binding site. Thr95 is a binding site for GTP. S-adenosyl-L-methionine is bound at residue Ser119. Lys155 lines the GTP pocket. S-adenosyl-L-methionine is bound at residue Met189. [4Fe-4S] cluster contacts are provided by Cys249 and Cys252. 254–256 (RIR) lines the GTP pocket. Cys266 is a binding site for [4Fe-4S] cluster.

Belongs to the radical SAM superfamily. MoaA family. Monomer and homodimer. It depends on [4Fe-4S] cluster as a cofactor.

The catalysed reaction is GTP + AH2 + S-adenosyl-L-methionine = (8S)-3',8-cyclo-7,8-dihydroguanosine 5'-triphosphate + 5'-deoxyadenosine + L-methionine + A + H(+). Its pathway is cofactor biosynthesis; molybdopterin biosynthesis. Catalyzes the cyclization of GTP to (8S)-3',8-cyclo-7,8-dihydroguanosine 5'-triphosphate. The polypeptide is GTP 3',8-cyclase (Campylobacter curvus (strain 525.92)).